Reading from the N-terminus, the 67-residue chain is Large ribosomal subunit protein bL28 (67 aa).

The protein belongs to the bacterial ribosomal protein bL28 family.

In Nitratiruptor sp. (strain SB155-2), this protein is Large ribosomal subunit protein bL28.